The primary structure comprises 794 residues: MRVRIGLTLLLCAVLLSLASASSDEEGSQDESLDSKTTLTSDESVKDHTTAGRVVAGQIFLDSEESELESSIQEEEDSLKSQEGESVTEDISFLESPNPENKDYEEPKKVRKPALTAIEGTAHGEPCHFPFLFLDKEYDECTSDGREDGRLWCATTYDYKADEKWGFCETEEEAAKRRQMQEAEMMYQTGMKILNGSNKKSQKREAYRYLQKAASMNHTKALERVSYALLFGDYLPQNIQAAREMFEKLTEEGSPKGQTALGFLYASGLGVNSSQAKALVYYTFGALGGNLIAHMVLGYRYWAGIGVLQSCESALTHYRLVANHVASDISLTGGSVVQRIRLPDEVENPGMNSGMLEEDLIQYYQFLAEKGDVQAQVGLGQLHLHGGRGVEQNHQRAFDYFNLAANAGNSHAMAFLGKMYSEGSDIVPQSNETALHYFKKAADMGNPVGQSGLGMAYLYGRGVQVNYDLALKYFQKAAEQGWVDGQLQLGSMYYNGIGVKRDYKQALKYFNLASQGGHILAFYNLAQMHASGTGVMRSCHTAVELFKNVCERGRWSERLMTAYNSYKDGDYNAAVIQYLLLAEQGYEVAQSNAAFILDQREASIVGENETYPRALLHWNRAASQGYTVARIKLGDYHFYGFGTDVDYETAFIHYRLASEQQHSAQAMFNLGYMHEKGLGIKQDIHLAKRFYDMAAEASPDAQVPVFLALCKLGVVYFLQYIRETNIRDMFTQLDMDQLLGPEWDLYLMTIIALLLGTVIAYRQRQHQDMPAPRPPGPRPAPPQQEGPPEQQPPQ.

An N-terminal signal peptide occupies residues 1–21 (MRVRIGLTLLLCAVLLSLASA). The interval 21–50 (ASSDEEGSQDESLDSKTTLTSDESVKDHTT) is disordered. Residues 22 to 737 (SSDEEGSQDE…DMFTQLDMDQ (716 aa)) form an interaction with ERLEC1, OS9 and SYVN1 region. Topologically, residues 22–738 (SSDEEGSQDE…MFTQLDMDQL (717 aa)) are lumenal. A compositionally biased stretch (acidic residues) spans 23 to 32 (SDEEGSQDES). Ser63 is modified (phosphoserine). Over residues 64–77 (EESELESSIQEEED) the composition is skewed to acidic residues. The tract at residues 64-109 (EESELESSIQEEEDSLKSQEGESVTEDISFLESPNPENKDYEEPKK) is disordered. The 49-residue stretch at 122 to 170 (AHGEPCHFPFLFLDKEYDECTSDGREDGRLWCATTYDYKADEKWGFCET) folds into the Fibronectin type-II domain. 2 disulfides stabilise this stretch: Cys127-Cys153 and Cys141-Cys168. Sel1-like repeat units follow at residues 183 to 218 (AEMM…SMNH), 219 to 254 (TKAL…EEGS), 255 to 290 (PKGQ…LGGN), 291 to 326 (LIAH…NHVA), 373 to 409 (VQAQ…NAGN), 410 to 446 (SHAM…DMGN), 447 to 482 (PVGQ…EQGW), 483 to 518 (VDGQ…QGGH), and 519 to 554 (ILAF…ERGR). N-linked (GlcNAc...) asparagine glycosylation is found at Asn195 and Asn217. Residue Asn272 is glycosylated (N-linked (GlcNAc...) asparagine). The important for homodimerization and oligomerization stretch occupies residues 352–537 (NSGMLEEDLI…MHASGTGVMR (186 aa)). N-linked (GlcNAc...) asparagine glycosylation is present at Asn431. A glycan (N-linked (GlcNAc...) asparagine) is linked at Asn608. Sel1-like repeat units lie at residues 627 to 662 (TVAR…EQQH) and 664 to 699 (AQAM…EASP). The tract at residues 643-723 (TDVDYETAFI…VVYFLQYIRE (81 aa)) is interaction with SYVN1. The interval 738 to 794 (LLGPEWDLYLMTIIALLLGTVIAYRQRQHQDMPAPRPPGPRPAPPQQEGPPEQQPPQ) is mediates retention in the endoplasmic reticulum. Residues 739 to 759 (LGPEWDLYLMTIIALLLGTVI) traverse the membrane as a helical segment. Topologically, residues 760–794 (AYRQRQHQDMPAPRPPGPRPAPPQQEGPPEQQPPQ) are cytoplasmic. Positions 766–794 (HQDMPAPRPPGPRPAPPQQEGPPEQQPPQ) are disordered. Residues 771 to 794 (APRPPGPRPAPPQQEGPPEQQPPQ) show a composition bias toward pro residues.

Belongs to the sel-1 family. In terms of assembly, homodimer and homooligomer. May form a complex with ERLEC1, HSPA5, OS9, and SYVN1. Interacts with FOXRED2 and EDEM1. Interacts with LPL. Interacts with LMF1; may stabilize the complex formed by LPL and LMF1 and thereby promote the export of LPL dimers. Component of the HRD1 complex, which comprises at least SYNV1/HRD1, DERL1/2, FAM8A1, HERPUD1/HERP, OS9, SEL1L and UBE2J1. SYNV1 assembles with SEL1L and FAM8A1 through its transmembrane domains, but interaction with its cytoplasmic domain is required to confer stability to FAM8A1 and enhance recruitment of HERPUD1. The interaction with SYNV1/HRD1 is direct. As to quaternary structure, (Microbial infection) Interacts with human cytomegalovirus protein UL148. In terms of processing, N-glycosylated. In terms of tissue distribution, highly expressed in pancreas.

The protein localises to the endoplasmic reticulum membrane. In terms of biological role, plays a role in the endoplasmic reticulum quality control (ERQC) system also called ER-associated degradation (ERAD) involved in ubiquitin-dependent degradation of misfolded endoplasmic reticulum proteins. Enhances SYVN1 stability. Plays a role in LPL maturation and secretion. Required for normal differentiation of the pancreas epithelium, and for normal exocrine function and survival of pancreatic cells. May play a role in Notch signaling. The sequence is that of Protein sel-1 homolog 1 from Homo sapiens (Human).